The primary structure comprises 326 residues: MANLRELRDRIRSVNSTKKITKAQELIATSRITKAQGRVAAAAPYAEEIQKVLERLASASSLDHPMLREREGGKRAAVLVVSSDRGMAGGYNHNVFKKAAELEKLLAEQGYEVVRYVTGSKGVGYYKFREDYVAGAWTGFSQDPDWNATHDVRRHLIDGFTATSDGTAKWRDGLNVAEGQEIQGFDQVHVVYTEFVSMLTQKPVVHQLLPVEPVIEDDIFERGESALSDGKNEIEPDYEFEPDADTLLEALLPQYISRRLFSIFLEAAAAESASRRNAMKSATDNATELVKDLSRVANAARQAQITQEITEIVGGAGALSGSGESD.

It belongs to the ATPase gamma chain family. In terms of assembly, F-type ATPases have 2 components, CF(1) - the catalytic core - and CF(0) - the membrane proton channel. CF(1) has five subunits: alpha(3), beta(3), gamma(1), delta(1), epsilon(1). CF(0) has three main subunits: a, b and c.

The protein localises to the cell membrane. In terms of biological role, produces ATP from ADP in the presence of a proton gradient across the membrane. The gamma chain is believed to be important in regulating ATPase activity and the flow of protons through the CF(0) complex. This is ATP synthase gamma chain from Corynebacterium efficiens (strain DSM 44549 / YS-314 / AJ 12310 / JCM 11189 / NBRC 100395).